Reading from the N-terminus, the 289-residue chain is Bidirectional sugar transporter SWEET10 (289 aa).

Residues 1 to 5 (MAISQ) are Extracellular-facing. Residues 6-26 (AVLATVFGILGNIISFFVCLA) traverse the membrane as a helical segment. The MtN3/slv 1 domain maps to 11–96 (VFGILGNIIS…SLFFFYAPKK (86 aa)). Residues 27 to 43 (PIPTFVRIYKRKSSEGY) are Cytoplasmic-facing. The chain crosses the membrane as a helical span at residues 44–64 (QSIPYVISLFSAMLWMYYAMI). Over 65–70 (KKDAMM) the chain is Extracellular. A helical transmembrane segment spans residues 71-91 (LITINSFAFVVQIVYISLFFF). The Cytoplasmic portion of the chain corresponds to 92–103 (YAPKKEKTLTVK). The helical transmembrane segment at 104 to 124 (FVLFVDVLGFGAIFVLTYFII) threads the bilayer. Residues 125–131 (HANKRVQ) lie on the Extracellular side of the membrane. Positions 131 to 214 (QVLGYICMVF…QMILFLIYKK (84 aa)) constitute a MtN3/slv 2 domain. A helical transmembrane segment spans residues 132 to 152 (VLGYICMVFALSVFVAPLGII). Topologically, residues 153–165 (RKVIKTKSAEFMP) are cytoplasmic. A helical transmembrane segment spans residues 166-186 (FGLSFFLTLSAVMWFFYGLLL). Residues 187–190 (KDMN) are Extracellular-facing. Residues 191-211 (IALPNVLGFIFGVLQMILFLI) traverse the membrane as a helical segment. Topologically, residues 212 to 289 (YKKPGTKVLE…EKEVFLISKN (78 aa)) are cytoplasmic.

It belongs to the SWEET sugar transporter family. Forms heterooligomers with SWEET8.

It localises to the cell membrane. In terms of biological role, mediates both low-affinity uptake and efflux of sugar across the plasma membrane. This chain is Bidirectional sugar transporter SWEET10, found in Arabidopsis thaliana (Mouse-ear cress).